Here is a 424-residue protein sequence, read N- to C-terminus: Tyrosine--tRNA ligase (424 aa).

Y37 contacts L-tyrosine. A 'HIGH' region motif is present at residues 42-51 (PTADSLHLGH). The residue at position 144 (K144) is an N6-acetyllysine. Residues Y175 and Q179 each coordinate L-tyrosine. Positions 235-239 (KFGKT) match the 'KMSKS' region motif. Residue K238 participates in ATP binding. The region spanning 357 to 414 (ADLMQALVDSELQPSRGQARKTIASNAITINGEKQSDPEYFFKEEDRLFGRFTLLRRG) is the S4 RNA-binding domain.

The protein belongs to the class-I aminoacyl-tRNA synthetase family. TyrS type 1 subfamily. Homodimer.

Its subcellular location is the cytoplasm. It carries out the reaction tRNA(Tyr) + L-tyrosine + ATP = L-tyrosyl-tRNA(Tyr) + AMP + diphosphate + H(+). Catalyzes the attachment of tyrosine to tRNA(Tyr) in a two-step reaction: tyrosine is first activated by ATP to form Tyr-AMP and then transferred to the acceptor end of tRNA(Tyr). This chain is Tyrosine--tRNA ligase, found in Shigella boydii serotype 4 (strain Sb227).